We begin with the raw amino-acid sequence, 883 residues long: Alanine--tRNA ligase (883 aa).

Zn(2+) contacts are provided by His562, His566, Cys675, and His679.

This sequence belongs to the class-II aminoacyl-tRNA synthetase family. The cofactor is Zn(2+).

The protein localises to the cytoplasm. The catalysed reaction is tRNA(Ala) + L-alanine + ATP = L-alanyl-tRNA(Ala) + AMP + diphosphate. Its function is as follows. Catalyzes the attachment of alanine to tRNA(Ala) in a two-step reaction: alanine is first activated by ATP to form Ala-AMP and then transferred to the acceptor end of tRNA(Ala). Also edits incorrectly charged Ser-tRNA(Ala) and Gly-tRNA(Ala) via its editing domain. This chain is Alanine--tRNA ligase, found in Ruegeria sp. (strain TM1040) (Silicibacter sp.).